The following is a 304-amino-acid chain: UDP-N-acetylenolpyruvoylglucosamine reductase (304 aa).

One can recognise an FAD-binding PCMH-type domain in the interval 28 to 193; sequence KTGGPADYLA…LTATFALTPG (166 aa). Arginine 172 is a catalytic residue. Residue serine 222 is the Proton donor of the active site. Residue glutamate 292 is part of the active site.

Belongs to the MurB family. FAD serves as cofactor.

The protein resides in the cytoplasm. It catalyses the reaction UDP-N-acetyl-alpha-D-muramate + NADP(+) = UDP-N-acetyl-3-O-(1-carboxyvinyl)-alpha-D-glucosamine + NADPH + H(+). The protein operates within cell wall biogenesis; peptidoglycan biosynthesis. In terms of biological role, cell wall formation. The protein is UDP-N-acetylenolpyruvoylglucosamine reductase of Levilactobacillus brevis (strain ATCC 367 / BCRC 12310 / CIP 105137 / JCM 1170 / LMG 11437 / NCIMB 947 / NCTC 947) (Lactobacillus brevis).